The following is a 305-amino-acid chain: UDP-3-O-acyl-N-acetylglucosamine deacetylase (305 aa).

Residues histidine 79, histidine 238, and aspartate 242 each contribute to the Zn(2+) site. Histidine 265 acts as the Proton donor in catalysis.

It belongs to the LpxC family. Zn(2+) is required as a cofactor.

It catalyses the reaction a UDP-3-O-[(3R)-3-hydroxyacyl]-N-acetyl-alpha-D-glucosamine + H2O = a UDP-3-O-[(3R)-3-hydroxyacyl]-alpha-D-glucosamine + acetate. It participates in glycolipid biosynthesis; lipid IV(A) biosynthesis; lipid IV(A) from (3R)-3-hydroxytetradecanoyl-[acyl-carrier-protein] and UDP-N-acetyl-alpha-D-glucosamine: step 2/6. In terms of biological role, catalyzes the hydrolysis of UDP-3-O-myristoyl-N-acetylglucosamine to form UDP-3-O-myristoylglucosamine and acetate, the committed step in lipid A biosynthesis. The polypeptide is UDP-3-O-acyl-N-acetylglucosamine deacetylase (Pasteurella multocida (strain Pm70)).